Reading from the N-terminus, the 237-residue chain is Deoxyribose-phosphate aldolase (237 aa).

Asp-94 acts as the Proton donor/acceptor in catalysis. Lys-158 serves as the catalytic Schiff-base intermediate with acetaldehyde. The active-site Proton donor/acceptor is Lys-187.

Belongs to the DeoC/FbaB aldolase family. DeoC type 1 subfamily.

Its subcellular location is the cytoplasm. The catalysed reaction is 2-deoxy-D-ribose 5-phosphate = D-glyceraldehyde 3-phosphate + acetaldehyde. It functions in the pathway carbohydrate degradation; 2-deoxy-D-ribose 1-phosphate degradation; D-glyceraldehyde 3-phosphate and acetaldehyde from 2-deoxy-alpha-D-ribose 1-phosphate: step 2/2. Functionally, catalyzes a reversible aldol reaction between acetaldehyde and D-glyceraldehyde 3-phosphate to generate 2-deoxy-D-ribose 5-phosphate. The protein is Deoxyribose-phosphate aldolase of Lactobacillus acidophilus (strain ATCC 700396 / NCK56 / N2 / NCFM).